Here is a 119-residue protein sequence, read N- to C-terminus: Large ribosomal subunit protein uL22 (119 aa).

This sequence belongs to the universal ribosomal protein uL22 family. In terms of assembly, part of the 50S ribosomal subunit.

In terms of biological role, this protein binds specifically to 23S rRNA; its binding is stimulated by other ribosomal proteins, e.g. L4, L17, and L20. It is important during the early stages of 50S assembly. It makes multiple contacts with different domains of the 23S rRNA in the assembled 50S subunit and ribosome. The globular domain of the protein is located near the polypeptide exit tunnel on the outside of the subunit, while an extended beta-hairpin is found that lines the wall of the exit tunnel in the center of the 70S ribosome. The sequence is that of Large ribosomal subunit protein uL22 from Trichormus variabilis (strain ATCC 29413 / PCC 7937) (Anabaena variabilis).